Reading from the N-terminus, the 466-residue chain is ATP synthase subunit beta (466 aa).

156–163 (GGAGVGKT) is a binding site for ATP.

It belongs to the ATPase alpha/beta chains family. F-type ATPases have 2 components, CF(1) - the catalytic core - and CF(0) - the membrane proton channel. CF(1) has five subunits: alpha(3), beta(3), gamma(1), delta(1), epsilon(1). CF(0) has three main subunits: a(1), b(2) and c(9-12). The alpha and beta chains form an alternating ring which encloses part of the gamma chain. CF(1) is attached to CF(0) by a central stalk formed by the gamma and epsilon chains, while a peripheral stalk is formed by the delta and b chains.

The protein resides in the cell membrane. It carries out the reaction ATP + H2O + 4 H(+)(in) = ADP + phosphate + 5 H(+)(out). Functionally, produces ATP from ADP in the presence of a proton gradient across the membrane. The catalytic sites are hosted primarily by the beta subunits. The polypeptide is ATP synthase subunit beta (Buchnera aphidicola subsp. Schizaphis graminum (strain Sg)).